The chain runs to 919 residues: Bifunctional uridylyltransferase/uridylyl-removing enzyme (919 aa).

The interval 1 to 373 (MTDPKVPRQR…LAGFNAKSRM (373 aa)) is uridylyltransferase. Residues 374–727 (LKGYTVFGGK…CEFDEERGAT (354 aa)) form a uridylyl-removing region. The HD domain maps to 489-611 (VDEHTIRAIG…VQSLERLRHL (123 aa)). 2 consecutive ACT domains span residues 728–811 (LVTV…LAKR) and 839–919 (VIEV…LEPA).

This sequence belongs to the GlnD family. The cofactor is Mg(2+).

The enzyme catalyses [protein-PII]-L-tyrosine + UTP = [protein-PII]-uridylyl-L-tyrosine + diphosphate. It catalyses the reaction [protein-PII]-uridylyl-L-tyrosine + H2O = [protein-PII]-L-tyrosine + UMP + H(+). With respect to regulation, uridylyltransferase (UTase) activity is inhibited by glutamine, while glutamine activates uridylyl-removing (UR) activity. In terms of biological role, modifies, by uridylylation and deuridylylation, the PII regulatory proteins (GlnB and homologs), in response to the nitrogen status of the cell that GlnD senses through the glutamine level. Under low glutamine levels, catalyzes the conversion of the PII proteins and UTP to PII-UMP and PPi, while under higher glutamine levels, GlnD hydrolyzes PII-UMP to PII and UMP (deuridylylation). Thus, controls uridylylation state and activity of the PII proteins, and plays an important role in the regulation of nitrogen assimilation and metabolism. This is Bifunctional uridylyltransferase/uridylyl-removing enzyme from Erythrobacter litoralis (strain HTCC2594).